Consider the following 273-residue polypeptide: 4-hydroxy-tetrahydrodipicolinate reductase (273 aa).

NAD(+)-binding positions include 12 to 17 (GAGGRM) and Glu-38. Arg-39 provides a ligand contact to NADP(+). Residues 102-104 (GTT) and 126-129 (AANF) contribute to the NAD(+) site. Catalysis depends on His-159, which acts as the Proton donor/acceptor. Residue His-160 participates in (S)-2,3,4,5-tetrahydrodipicolinate binding. The active-site Proton donor is Lys-163. 169–170 (GT) is a binding site for (S)-2,3,4,5-tetrahydrodipicolinate.

The protein belongs to the DapB family. In terms of assembly, homotetramer.

Its subcellular location is the cytoplasm. It catalyses the reaction (S)-2,3,4,5-tetrahydrodipicolinate + NAD(+) + H2O = (2S,4S)-4-hydroxy-2,3,4,5-tetrahydrodipicolinate + NADH + H(+). The enzyme catalyses (S)-2,3,4,5-tetrahydrodipicolinate + NADP(+) + H2O = (2S,4S)-4-hydroxy-2,3,4,5-tetrahydrodipicolinate + NADPH + H(+). Its pathway is amino-acid biosynthesis; L-lysine biosynthesis via DAP pathway; (S)-tetrahydrodipicolinate from L-aspartate: step 4/4. In terms of biological role, catalyzes the conversion of 4-hydroxy-tetrahydrodipicolinate (HTPA) to tetrahydrodipicolinate. This Klebsiella pneumoniae subsp. pneumoniae (strain ATCC 700721 / MGH 78578) protein is 4-hydroxy-tetrahydrodipicolinate reductase.